The chain runs to 180 residues: Large ribosomal subunit protein uL5 (180 aa).

It belongs to the universal ribosomal protein uL5 family. As to quaternary structure, part of the 50S ribosomal subunit; part of the 5S rRNA/L5/L18/L25 subcomplex. Contacts the 5S rRNA and the P site tRNA. Forms a bridge to the 30S subunit in the 70S ribosome.

Its function is as follows. This is one of the proteins that bind and probably mediate the attachment of the 5S RNA into the large ribosomal subunit, where it forms part of the central protuberance. In the 70S ribosome it contacts protein S13 of the 30S subunit (bridge B1b), connecting the 2 subunits; this bridge is implicated in subunit movement. Contacts the P site tRNA; the 5S rRNA and some of its associated proteins might help stabilize positioning of ribosome-bound tRNAs. This chain is Large ribosomal subunit protein uL5, found in Leuconostoc mesenteroides subsp. mesenteroides (strain ATCC 8293 / DSM 20343 / BCRC 11652 / CCM 1803 / JCM 6124 / NCDO 523 / NBRC 100496 / NCIMB 8023 / NCTC 12954 / NRRL B-1118 / 37Y).